A 454-amino-acid chain; its full sequence is NADP-specific glutamate dehydrogenase (454 aa).

Ser-2 carries the N-acetylserine modification. Lys-114 is an active-site residue.

Belongs to the Glu/Leu/Phe/Val dehydrogenases family. As to quaternary structure, homohexamer.

It carries out the reaction L-glutamate + NADP(+) + H2O = 2-oxoglutarate + NH4(+) + NADPH + H(+). In Neurospora intermedia, this protein is NADP-specific glutamate dehydrogenase (GDH).